A 295-amino-acid polypeptide reads, in one-letter code: Methionine aminopeptidase (295 aa).

A substrate-binding site is contributed by His-62. 3 residues coordinate a divalent metal cation: Asp-82, Asp-93, and His-153. His-161 contacts substrate. A divalent metal cation contacts are provided by Glu-187 and Glu-280.

This sequence belongs to the peptidase M24A family. Methionine aminopeptidase archaeal type 2 subfamily. In terms of assembly, monomer. It depends on Co(2+) as a cofactor. Requires Zn(2+) as cofactor. Mn(2+) serves as cofactor. The cofactor is Fe(2+).

It carries out the reaction Release of N-terminal amino acids, preferentially methionine, from peptides and arylamides.. Its function is as follows. Removes the N-terminal methionine from nascent proteins. The N-terminal methionine is often cleaved when the second residue in the primary sequence is small and uncharged (Met-Ala-, Cys, Gly, Pro, Ser, Thr, or Val). The chain is Methionine aminopeptidase from Pyrococcus horikoshii (strain ATCC 700860 / DSM 12428 / JCM 9974 / NBRC 100139 / OT-3).